The chain runs to 121 residues: Large ribosomal subunit protein uL22 (121 aa).

Belongs to the universal ribosomal protein uL22 family. Part of the 50S ribosomal subunit.

In terms of biological role, this protein binds specifically to 23S rRNA; its binding is stimulated by other ribosomal proteins, e.g. L4, L17, and L20. It is important during the early stages of 50S assembly. It makes multiple contacts with different domains of the 23S rRNA in the assembled 50S subunit and ribosome. Functionally, the globular domain of the protein is located near the polypeptide exit tunnel on the outside of the subunit, while an extended beta-hairpin is found that lines the wall of the exit tunnel in the center of the 70S ribosome. The polypeptide is Large ribosomal subunit protein uL22 (Synechococcus sp. (strain WH7803)).